The following is a 360-amino-acid chain: N5-carboxyaminoimidazole ribonucleotide synthase (360 aa).

ATP-binding positions include R98, K138, 143-149 (GYDGKGQ), 173-176 (EGFV), E181, H204, and 255-256 (NE). In terms of domain architecture, ATP-grasp spans 102–285 (KSMFKDLGIP…QFENHLRAVA (184 aa)).

It belongs to the PurK/PurT family. Homodimer.

The catalysed reaction is 5-amino-1-(5-phospho-beta-D-ribosyl)imidazole + hydrogencarbonate + ATP = 5-carboxyamino-1-(5-phospho-D-ribosyl)imidazole + ADP + phosphate + 2 H(+). It participates in purine metabolism; IMP biosynthesis via de novo pathway; 5-amino-1-(5-phospho-D-ribosyl)imidazole-4-carboxylate from 5-amino-1-(5-phospho-D-ribosyl)imidazole (N5-CAIR route): step 1/2. Catalyzes the ATP-dependent conversion of 5-aminoimidazole ribonucleotide (AIR) and HCO(3)(-) to N5-carboxyaminoimidazole ribonucleotide (N5-CAIR). In Pseudomonas aeruginosa (strain ATCC 15692 / DSM 22644 / CIP 104116 / JCM 14847 / LMG 12228 / 1C / PRS 101 / PAO1), this protein is N5-carboxyaminoimidazole ribonucleotide synthase.